Reading from the N-terminus, the 208-residue chain is Ubiquinone biosynthesis protein COQ4 homolog, mitochondrial (208 aa).

Zn(2+) is bound by residues histidine 105, aspartate 106, histidine 109, and glutamate 122.

Belongs to the COQ4 family. In terms of assembly, component of a multi-subunit COQ enzyme complex. Requires Zn(2+) as cofactor.

Its subcellular location is the mitochondrion inner membrane. It carries out the reaction a 4-hydroxy-3-methoxy-5-(all-trans-polyprenyl)benzoate + H(+) = a 2-methoxy-6-(all-trans-polyprenyl)phenol + CO2. Its pathway is cofactor biosynthesis; ubiquinone biosynthesis. Its function is as follows. Lyase that catalyzes the C1-decarboxylation of 4-hydroxy-3-methoxy-5-(all-trans-polyprenyl)benzoic acid into 2-methoxy-6-(all-trans-polyprenyl)phenol during ubiquinone biosynthesis. This is Ubiquinone biosynthesis protein COQ4 homolog, mitochondrial from Nematostella vectensis (Starlet sea anemone).